A 426-amino-acid chain; its full sequence is Enolase (426 aa).

Position 162 (glutamine 162) interacts with (2R)-2-phosphoglycerate. The active-site Proton donor is the glutamate 204. Positions 241, 284, and 311 each coordinate Mg(2+). 4 residues coordinate (2R)-2-phosphoglycerate: lysine 336, arginine 365, serine 366, and lysine 387. Lysine 336 acts as the Proton acceptor in catalysis.

This sequence belongs to the enolase family. Component of the RNA degradosome, a multiprotein complex involved in RNA processing and mRNA degradation. Mg(2+) serves as cofactor.

It is found in the cytoplasm. Its subcellular location is the secreted. The protein resides in the cell surface. The enzyme catalyses (2R)-2-phosphoglycerate = phosphoenolpyruvate + H2O. It participates in carbohydrate degradation; glycolysis; pyruvate from D-glyceraldehyde 3-phosphate: step 4/5. Catalyzes the reversible conversion of 2-phosphoglycerate (2-PG) into phosphoenolpyruvate (PEP). It is essential for the degradation of carbohydrates via glycolysis. The polypeptide is Enolase (Thioalkalivibrio sulfidiphilus (strain HL-EbGR7)).